Here is a 1289-residue protein sequence, read N- to C-terminus: MANVWGVRLADSLSSPTIETRTRHYTLRDFCSDLDAVAGKEPWRPLRNQRTNDIVAVQLFRPLQGLVLDTQFYGFPGIFSEWEQFIKEKLRVLKYEVLRIYPISNYNHERVNVFVANALVGAFLSNQAFYDLLPLLVINDTMINDLLGTGAALSQFFQSHGEVLEVAAGRKYLQMKNYSNDDDDPPLFAKDLSDYAKAFYSDTFETLDRFFWTHDSSAGVLVHYDKPTNGNHYILGTLTQMVSAPPHIINATDALLLESCLEQFAANVRARPAQPVARLDQCYHLRWGAQYVGEDSLTYRLGVLSLLATNGYQLARPIPKQLTNRWLSSFVSQVMSDGVNETPLWPQERYVQIAYDSPSVVDGATHYGYVRRNQLRLGMRVSALQSLSDTPAPIQWLPQYTIEQAAVDEGDLMVSRLTQLPLRPDYGSIWVGDALSYYVDYNRSHRVVLSSELPQLPDTYFDGDEQYGRSLFSLARKIGDRSLIKDTAVLKHAYQAIDPNTGKEYLRAGQSVAYFGASAGHSGADQPLVIEPWTQGKISGVPPPSSVRQFGYDVAKGAIVDLARPFPSGDYQFVYSDVDQVVDGHDDLSISSGLVESLLDSCMHATSPGGSFVMKINFPTRTVWHYIEQKILPNITSYMLIKPFVTNNVELFFVAFGVHQQSALTWTSGVYFFLVDHFYRYETLSTISRQLPSFGYVDDGSSVTGIEMISLENPGFSNMTQAARVGISGLCANVGNARKLISIHESHGARVLTITSRRSPASARRKARLRYLPLVDPRSLEVQARTILPSNPVLFDNVNGASPHVCLTMMYNFEVSSAVYDGDVVLDLGTGPEAKILELIPPTSPVTCVDIRPTAQPSGCWNVRTTFLELDYLSDGWITGIRGDIVTCMLSLGAAAAGKSMTFDAAFQQLVKVLTKSTANVLLIQVNCPTDVIRTIKGYLEIDQTNKRYRFPKFGRDEPYSDMDSLERICRAAWPNCSITWVPLSYDLRWTKLALLESTTLSSASVRIAELMYKYMPVMRIDIHGLPMEKQGNFIVGQNCSLTIPGFNAQDVFNCYFNSALAFSTEDVNSAMIPQVTAQFDANKGEWSLDMVFSDAGIYTMQALVGSNANPVSLGSFVVDSPDVDITDAWPAQLDFTIAGTDVDITVNPYYRLMAFVRIDGQWQIANPDKFQFFSSSTGTLVMNVKLDIADRYLLYYIRDVQSRDVGFYIQHPLQLLNTITLPTNEDLFLSAPDMREWAVKESGNTICILNSQGFVPPQDWDVLTDTISWSPSLPTYVVPPGDYTLTPL.

Position 893–900 (893–900) interacts with ATP; sequence GAAAAGKS.

This sequence belongs to the orthoreovirus lambda-2 protein family. In terms of assembly, interacts with protein mu-NS; in viral inclusions.

Its subcellular location is the virion. The catalysed reaction is a 5'-end diphospho-ribonucleoside in mRNA + GTP + H(+) = a 5'-end (5'-triphosphoguanosine)-ribonucleoside in mRNA + diphosphate. It carries out the reaction a 5'-end (5'-triphosphoguanosine)-ribonucleoside in mRNA + S-adenosyl-L-methionine = a 5'-end (N(7)-methyl 5'-triphosphoguanosine)-ribonucleoside in mRNA + S-adenosyl-L-homocysteine. Functionally, outer capsid protein involved in mRNA capping. Catalyzes the last 3 enzymatic activities for formation of the 5' cap structure on the viral plus-strand transcripts, namely the RNA guanylyltransferase, RNA-7N- and RNA-2'O-methyltransferase activities. This Reovirus type 1 (strain Lang) (T1L) protein is Outer capsid protein lambda-2 (L2).